The primary structure comprises 206 residues: MAVVKVYDQNKKEAGELTLAPEVFEVEVKPEILNLVVRAHRAGLRSGTHATKTRAFVSGGGAKPWRQKGTGRARSGSNRSPIWRGGAVIFGPQPREYGFKVNKKVRQLALKMALSSRLAGENLMVVKGIELPEIKTKLFAKVAGALGLEKALVITAEADTTLALSARNIPGITLITADQLSVYEILKHPKLVMFEGAVESVQARLK.

The disordered stretch occupies residues 55–80 (AFVSGGGAKPWRQKGTGRARSGSNRS).

It belongs to the universal ribosomal protein uL4 family. In terms of assembly, part of the 50S ribosomal subunit.

Its function is as follows. One of the primary rRNA binding proteins, this protein initially binds near the 5'-end of the 23S rRNA. It is important during the early stages of 50S assembly. It makes multiple contacts with different domains of the 23S rRNA in the assembled 50S subunit and ribosome. In terms of biological role, forms part of the polypeptide exit tunnel. This chain is Large ribosomal subunit protein uL4, found in Nitratidesulfovibrio vulgaris (strain DSM 19637 / Miyazaki F) (Desulfovibrio vulgaris).